A 534-amino-acid polypeptide reads, in one-letter code: Probable alkaline/neutral invertase D (534 aa).

Ser-7 and Ser-37 each carry phosphoserine. At Thr-55 the chain carries Phosphothreonine. Position 532 is a phosphoserine (Ser-532).

It belongs to the glycosyl hydrolase 100 family.

The catalysed reaction is Hydrolysis of terminal non-reducing beta-D-fructofuranoside residues in beta-D-fructofuranosides.. Invertase that cleaves sucrose into glucose and fructose. The sequence is that of Probable alkaline/neutral invertase D from Arabidopsis thaliana (Mouse-ear cress).